Consider the following 336-residue polypeptide: Phospho-N-acetylmuramoyl-pentapeptide-transferase (336 aa).

Transmembrane regions (helical) follow at residues 3–23 (LSIM…PRFI), 52–72 (MGGT…SIIL), 79–99 (NLGA…IGFL), 123–143 (LIAG…SAIN), 144–164 (IFGF…FWVV), 175–195 (GIDG…GIIA), 201–221 (FDIL…FVFN), 227–247 (VFMG…ISIA), 255–275 (LFIG…VAYF), and 315–335 (VDAF…AILY).

It belongs to the glycosyltransferase 4 family. MraY subfamily. Mg(2+) is required as a cofactor.

Its subcellular location is the cell membrane. The catalysed reaction is UDP-N-acetyl-alpha-D-muramoyl-L-alanyl-gamma-D-glutamyl-L-lysyl-D-alanyl-D-alanine + di-trans,octa-cis-undecaprenyl phosphate = Mur2Ac(oyl-L-Ala-gamma-D-Glu-L-Lys-D-Ala-D-Ala)-di-trans,octa-cis-undecaprenyl diphosphate + UMP. Its pathway is cell wall biogenesis; peptidoglycan biosynthesis. Catalyzes the initial step of the lipid cycle reactions in the biosynthesis of the cell wall peptidoglycan: transfers peptidoglycan precursor phospho-MurNAc-pentapeptide from UDP-MurNAc-pentapeptide onto the lipid carrier undecaprenyl phosphate, yielding undecaprenyl-pyrophosphoryl-MurNAc-pentapeptide, known as lipid I. The polypeptide is Phospho-N-acetylmuramoyl-pentapeptide-transferase (Streptococcus agalactiae serotype Ia (strain ATCC 27591 / A909 / CDC SS700)).